The sequence spans 728 residues: MSNETKCPFNHTAGGGTTNKDWWPNQLNLNILHRHSALSDPMDKDFDYAEAFKKLDLAAVKKDLHALMTASQDWWPADFGHYGGLFVRMAWHSAGTYRTADGRGGAGGGQQRFAPLNSWPDNVSLDKARRLLWPIKQKYGRNISWADLLILTGNVALESMGFKTFGYAGGRVDTWEPDDVYWGSEKIWLELSGGPNSRYSGKRDLESPLAAVQMGLIYVNPEGPDGTPDPVAAAHDIRETFARMAMNDEETVALIAGGHTFGKTHGAGPASNVGAEPEAAGLEEQGLGWKSTFGTGKGKDAITSGLEVTWTSTPTQWSNDFFKHLFSYEWELTKSPAGAHQWVAKDAGDVIPDAFDASKKHRPTMLTTDLSLRFDPAYEKISRRFYENPAEFADAFARAWFKLTHRDMGPRARYLGPDVPAEHLLWQDPIPAVDHKLIDDADVAALKAKVLASGLSVSQLVSTAWASAATFRGSDKRGGANGARIRLAPQKDWEVNRPAELAKVLATLEGVQKAFNDAQTGGKKVSLADLIVLAGAAGVEQAAKNAGVAVTVPFAPGRADATQEETDIEAMAVLEPVADGFRNFLKHAYQTPAEALLVDKAQLLTLTAPEMTALVGGLRVLGANAGDAKQGVFTDRPEALTNDFFVNLLDMGTEWKPVSAANDVFEGRDRATGQVKWTGSRVDLIFGSHAQLRALAEVYGSADAKEKFAHDFVAAWNKVMNLDRFDLA.

The segment at residues 91 to 218 (WHSAGTYRTA…LAAVQMGLIY (128 aa)) is a cross-link (tryptophyl-tyrosyl-methioninium (Trp-Tyr) (with M-244)). His92 (proton acceptor) is an active-site residue. Positions 218-244 (YVNPEGPDGTPDPVAAAHDIRETFARM) form a cross-link, tryptophyl-tyrosyl-methioninium (Tyr-Met) (with W-91). His259 serves as a coordination point for heme b.

This sequence belongs to the peroxidase family. Peroxidase/catalase subfamily. In terms of assembly, homodimer or homotetramer. The cofactor is heme b. Post-translationally, formation of the three residue Trp-Tyr-Met cross-link is important for the catalase, but not the peroxidase activity of the enzyme.

The enzyme catalyses H2O2 + AH2 = A + 2 H2O. It catalyses the reaction 2 H2O2 = O2 + 2 H2O. Functionally, bifunctional enzyme with both catalase and broad-spectrum peroxidase activity. This chain is Catalase-peroxidase, found in Burkholderia lata (strain ATCC 17760 / DSM 23089 / LMG 22485 / NCIMB 9086 / R18194 / 383).